Consider the following 1692-residue polypeptide: Regulating synaptic membrane exocytosis protein 1 (1692 aa).

Residues 1-26 (MSSAVGPRGPRPPTVPPPMQELPDLS) are disordered. Pro residues predominate over residues 9–20 (GPRPPTVPPPMQ). The region spanning 22-182 (LPDLSHLTEE…TKSGAWFFGS (161 aa)) is the RabBD domain. The segment at 110-170 (KDDAPTCGIC…VCNLCRKQQE (61 aa)) adopts an FYVE-type zinc-finger fold. The Zn(2+) site is built by Cys-116, Cys-119, Cys-132, Cys-135, Cys-140, Cys-143, Cys-162, and Cys-165. Residues 183–199 (GPQQTSQDGTLSDTATG) are compositionally biased toward polar residues. The disordered stretch occupies residues 183–555 (GPQQTSQDGT…CEDVELESES (373 aa)). Basic and acidic residues predominate over residues 204 to 217 (VPREKKARLQERSR). The span at 223–234 (STAAASSQDAAP) shows a compositional bias: low complexity. The span at 305–357 (VEERERKERRESRRLEKGRSQDYPDTPEKRDEGKAADEEKQRKEEDYQTRYRS) shows a compositional bias: basic and acidic residues. Positions 377-388 (MHARVSRARHER) are enriched in basic residues. Residues 412 to 430 (RAPAAARASPPDSPRAYSA) show a composition bias toward low complexity. Over residues 462–475 (PELKAQEPLRKQSR) the composition is skewed to basic and acidic residues. Residues 497 to 509 (RNDSLSSDQSESV) are compositionally biased toward polar residues. A Phosphoserine modification is found at Ser-500. Over residues 515–527 (KPHRSKRGGKKRQ) the composition is skewed to basic residues. A compositionally biased stretch (acidic residues) spans 545–555 (SCEDVELESES). Ser-578 carries the phosphoserine modification. In terms of domain architecture, PDZ spans 605–691 (RTTMPKDSGA…EPQVEIIVSR (87 aa)). The segment at 698-732 (RIPESSHPPLESSSSSFESQKMERPSISVISPTSP) is disordered. The segment covering 700–716 (PESSHPPLESSSSSFES) has biased composition (low complexity). Residues Ser-728 and Ser-731 each carry the phosphoserine modification. Positions 742-865 (LPGQLSVKLW…ALLDDEPHWY (124 aa)) constitute a C2 1 domain. The disordered stretch occupies residues 870–1013 (HDESSLPLPQ…RTRDVDSQYL (144 aa)). The residue at position 881 (Ser-881) is a Phosphoserine. Residues 935 to 944 (STTLTVPEQQ) show a composition bias toward polar residues. The residue at position 977 (Ser-977) is a Phosphoserine. Positions 992–1009 (RHHDASRSPVDHRTRDVD) are enriched in basic and acidic residues. Ser-1031 is subject to Phosphoserine. 2 disordered regions span residues 1118 to 1222 (NCLR…EHSS) and 1235 to 1278 (GGSA…PVRS). Basic and acidic residues-rich tracts occupy residues 1128-1144 (SPER…DRRR) and 1157-1170 (PEND…ERSS). Residue Ser-1252 is modified to Phosphoserine. Residues 1252–1265 (SPTQSPPADTSFSS) show a composition bias toward polar residues. Thr-1254 carries the phosphothreonine modification. Phosphoserine is present on residues Ser-1256, Ser-1308, Ser-1310, Ser-1311, Ser-1339, Ser-1340, and Ser-1342. Disordered regions lie at residues 1332–1394 (CDNV…SGRS), 1408–1428 (LEHN…AGGK), and 1445–1495 (RSRS…GSIN). Residues 1345 to 1366 (SDVSAISRTSSASRLSSTSFMS) are compositionally biased toward low complexity. Phosphoserine is present on Ser-1416. Positions 1477–1490 (EMRKMVRQPSREST) are enriched in basic and acidic residues. The C2 2 domain occupies 1538–1656 (AMGDIQIGME…DLSSMVIGWY (119 aa)). Phosphoserine is present on residues Ser-1677, Ser-1680, Ser-1683, and Ser-1692.

As to quaternary structure, binds RAB3A, RAB3B and RAB3D that have been activated by GTP-binding. Interacts with RAB3C, RAB10, RAB26 and RAB37. Binds UNC13A. Interacts with TSPOAP1 and RIMBP2. Interacts with PPFIA3 and PPFIA4. Interacts with ERC1. Binds SNAP25, SYT1 and CACNA1B. Interaction with SYT1 is enhanced by calcium ions. Interaction with SNAP25 is weaker in the presence of calcium ions. Phosphorylated by BRSK1. Expressed in melanocytes. Detected in brain and retina.

The protein localises to the cell membrane. It localises to the synapse. The protein resides in the presynaptic cell membrane. Functionally, rab effector involved in exocytosis. May act as scaffold protein that regulates neurotransmitter release at the active zone. Essential for maintaining normal probability of neurotransmitter release and for regulating release during short-term synaptic plasticity. Plays a role in dendrite formation by melanocytes. The chain is Regulating synaptic membrane exocytosis protein 1 (RIMS1) from Homo sapiens (Human).